Consider the following 417-residue polypeptide: MLEQMGKAAKAASYQLAVLSTAQKDRALLTIADLLEAESATILAANALDLADARQNGMSEALQDRLLLTQERLSAIASDVRQVCRLTDPVGQVIDGSMLDNGLKLERRRVPLGVVGVIYEARPNVTIDVASLCLKTGNAVILRGGKETYRTNAATVKVIQQALSQCGLPAAAVQAIESPDRELVNQLLKLDRYVDMLIPRGGAGLHKLCREQSTIPVITGGIGVCHIYADDSIDFDKALTVIESAKVQRPSACNSLETLLVNQRIADRFLPELSKKMAAAGVTLHASPSAMPYLTGGPASVVAVEEANYNDEWLSNDLNVTLVDDLDAAVAHIREHGTQHSDAILTRSLTNAERFVREVDSSAVYVNASTRFTDGGQFGLGAEVAVSTQKLHARGPMGLEALTTYKWIGYGDDLIRA.

The protein belongs to the gamma-glutamyl phosphate reductase family.

The protein localises to the cytoplasm. The catalysed reaction is L-glutamate 5-semialdehyde + phosphate + NADP(+) = L-glutamyl 5-phosphate + NADPH + H(+). It participates in amino-acid biosynthesis; L-proline biosynthesis; L-glutamate 5-semialdehyde from L-glutamate: step 2/2. Functionally, catalyzes the NADPH-dependent reduction of L-glutamate 5-phosphate into L-glutamate 5-semialdehyde and phosphate. The product spontaneously undergoes cyclization to form 1-pyrroline-5-carboxylate. This is Gamma-glutamyl phosphate reductase from Pectobacterium carotovorum subsp. carotovorum (strain PC1).